The chain runs to 265 residues: MILEKIKEKKREEIRQLLLTANVAHMKKKILELPPARDFRKALYNQGQVSLIAEIKKASPSKGLLCPNFDHRQLAHIYQSNGAAALSVLTDENFFLGKLTYLEEIKQQSSLPLLRKDFILDPVQLYQSRLAGADAVLLIAGLLTPGELSQLFLLCREIGMQALVEVHTQEELQRVLTTDAKLIGINNRDLSTFQTNLATTAKLLEQVQIEDITIVSESGIAQKEDIKFLKSLGVHGVLVGEALVTAQDIAKKVQEIVVAGGRGEA.

It belongs to the TrpC family.

It carries out the reaction 1-(2-carboxyphenylamino)-1-deoxy-D-ribulose 5-phosphate + H(+) = (1S,2R)-1-C-(indol-3-yl)glycerol 3-phosphate + CO2 + H2O. Its pathway is amino-acid biosynthesis; L-tryptophan biosynthesis; L-tryptophan from chorismate: step 4/5. The polypeptide is Indole-3-glycerol phosphate synthase (Desulforamulus reducens (strain ATCC BAA-1160 / DSM 100696 / MI-1) (Desulfotomaculum reducens)).